The following is a 447-amino-acid chain: CBL-interacting serine/threonine-protein kinase 9 (447 aa).

The region spanning tyrosine 19–phenylalanine 274 is the Protein kinase domain. Residues leucine 25–valine 33 and lysine 48 each bind ATP. The active-site Proton acceptor is aspartate 142. Residues aspartate 160–glutamate 189 are activation loop. Serine 164 is modified (phosphoserine). Position 178 is a phosphothreonine (threonine 178). Residues glutamate 312–glutamate 336 enclose the NAF domain. The PPI stretch occupies residues lysine 343–valine 372.

The protein belongs to the protein kinase superfamily. CAMK Ser/Thr protein kinase family. SNF1 subfamily. In terms of assembly, interacts with CBL2 and CBL3. Mn(2+) is required as a cofactor. In terms of tissue distribution, expressed at low levels in roots and shoots. Detected in root vascular bundles and in the leaf vascular tissue and hydathode, but not in root tips.

It localises to the cytoplasm. The protein resides in the nucleus. It catalyses the reaction L-seryl-[protein] + ATP = O-phospho-L-seryl-[protein] + ADP + H(+). It carries out the reaction L-threonyl-[protein] + ATP = O-phospho-L-threonyl-[protein] + ADP + H(+). Functionally, CIPK serine-threonine protein kinases interact with CBL proteins. Binding of a CBL protein to the regulatory NAF domain of CIPK protein lead to the activation of the kinase in a calcium-dependent manner. Involved in K(+) homeostasis under low-K(+) stress. This Arabidopsis thaliana (Mouse-ear cress) protein is CBL-interacting serine/threonine-protein kinase 9 (CIPK9).